A 185-amino-acid chain; its full sequence is UPF0301 protein PSHAa2600 (185 aa).

This sequence belongs to the UPF0301 (AlgH) family.

The protein is UPF0301 protein PSHAa2600 of Pseudoalteromonas translucida (strain TAC 125).